The following is a 262-amino-acid chain: Ribose-5-phosphate isomerase A (262 aa).

Substrate-binding positions include Thr-33 to Thr-36, Asp-89 to Asp-92, and Lys-102 to Gly-105. Glu-111 (proton acceptor) is an active-site residue. Residue Lys-129 participates in substrate binding.

Belongs to the ribose 5-phosphate isomerase family. Homodimer.

The catalysed reaction is aldehydo-D-ribose 5-phosphate = D-ribulose 5-phosphate. Its pathway is carbohydrate degradation; pentose phosphate pathway; D-ribose 5-phosphate from D-ribulose 5-phosphate (non-oxidative stage): step 1/1. Catalyzes the reversible conversion of ribose-5-phosphate to ribulose 5-phosphate. The chain is Ribose-5-phosphate isomerase A from Cereibacter sphaeroides (strain KD131 / KCTC 12085) (Rhodobacter sphaeroides).